The following is a 191-amino-acid chain: Ubiquinol-cytochrome c reductase iron-sulfur subunit (191 aa).

A helical membrane pass occupies residues 18–35 (ATAATGVVVTGAAVWPLI). Positions 94 to 189 (RDTSAENANK…AAFVDETTIK (96 aa)) constitute a Rieske domain. Residues 95-116 (DTSAENANKPGAEATDENRTLP) form a disordered region. [2Fe-2S] cluster-binding residues include Cys133, His135, Cys153, and His156. Cys138 and Cys155 are joined by a disulfide.

Belongs to the Rieske iron-sulfur protein family. The main subunits of complex b-c1 are: cytochrome b, cytochrome c1 and the Rieske protein. Requires [2Fe-2S] cluster as cofactor.

It is found in the cell membrane. It carries out the reaction a quinol + 2 Fe(III)-[cytochrome c](out) = a quinone + 2 Fe(II)-[cytochrome c](out) + 2 H(+)(out). Functionally, component of the ubiquinol-cytochrome c reductase complex (complex III or cytochrome b-c1 complex), which is a respiratory chain that generates an electrochemical potential coupled to ATP synthesis. This chain is Ubiquinol-cytochrome c reductase iron-sulfur subunit (petA), found in Rhodobacter capsulatus (strain ATCC BAA-309 / NBRC 16581 / SB1003).